Reading from the N-terminus, the 30-residue chain is Brevinin-2Ej (30 aa).

Cys24 and Cys30 are joined by a disulfide.

In terms of tissue distribution, expressed by the skin glands.

It is found in the secreted. Functionally, shows antibacterial activity against representative Gram-negative and Gram-positive bacterial species, and hemolytic activity. This chain is Brevinin-2Ej, found in Pelophylax ridibundus (Marsh frog).